The following is a 486-amino-acid chain: Glutamyl-tRNA(Gln) amidotransferase subunit A (486 aa).

Active-site charge relay system residues include Lys-74 and Ser-149. The active-site Acyl-ester intermediate is the Ser-173.

This sequence belongs to the amidase family. GatA subfamily. In terms of assembly, heterotrimer of A, B and C subunits.

It catalyses the reaction L-glutamyl-tRNA(Gln) + L-glutamine + ATP + H2O = L-glutaminyl-tRNA(Gln) + L-glutamate + ADP + phosphate + H(+). Functionally, allows the formation of correctly charged Gln-tRNA(Gln) through the transamidation of misacylated Glu-tRNA(Gln) in organisms which lack glutaminyl-tRNA synthetase. The reaction takes place in the presence of glutamine and ATP through an activated gamma-phospho-Glu-tRNA(Gln). This is Glutamyl-tRNA(Gln) amidotransferase subunit A from Prochlorococcus marinus (strain MIT 9303).